The sequence spans 454 residues: Probable ECA polymerase (454 aa).

A run of 11 helical transmembrane segments spans residues 6 to 26, 37 to 57, 63 to 83, 122 to 142, 157 to 177, 183 to 203, 209 to 229, 230 to 250, 343 to 363, 380 to 400, and 411 to 431; these read FSGLFIVWLLATLFIGTLTWF, VFFSLLFLLTFFFGFPLTSIL, VAVVPAEVLLQALLSAGCFYA, MMAVALVSVGIFFMHNGFLLF, GVALKRFFYFFIPAMLVVYFL, AWLFFLVSTVGFGLLTYMIVG, IIIAFAIFLFIGIIRGWISPG, MLAAAGVMGIVGMFWLALKRY, LVVMGGVWFIPPGAVVVGLII, YKAAILHSFCFGAIFNMIVLA, and VIFFMVVFGACLVVAKLIYWL.

Belongs to the WzyE family. In terms of assembly, probably part of a complex composed of WzxE, WzyE and WzzE.

The protein localises to the cell inner membrane. It participates in bacterial outer membrane biogenesis; enterobacterial common antigen biosynthesis. Probably involved in the polymerization of enterobacterial common antigen (ECA) trisaccharide repeat units. The polypeptide is Probable ECA polymerase (Cronobacter sakazakii (strain ATCC BAA-894) (Enterobacter sakazakii)).